The primary structure comprises 200 residues: Elongation factor Ts (200 aa).

The tract at residues 81-84 (TDFV) is involved in Mg(2+) ion dislocation from EF-Tu.

The protein belongs to the EF-Ts family.

The protein resides in the cytoplasm. Functionally, associates with the EF-Tu.GDP complex and induces the exchange of GDP to GTP. It remains bound to the aminoacyl-tRNA.EF-Tu.GTP complex up to the GTP hydrolysis stage on the ribosome. The polypeptide is Elongation factor Ts (Nitratidesulfovibrio vulgaris (strain DSM 19637 / Miyazaki F) (Desulfovibrio vulgaris)).